A 264-amino-acid polypeptide reads, in one-letter code: Shikimate dehydrogenase (NADP(+)) (264 aa).

Shikimate-binding positions include 14 to 16 and threonine 61; that span reads SVS. The Proton acceptor role is filled by lysine 65. 2 residues coordinate shikimate: asparagine 85 and aspartate 99. NADP(+) contacts are provided by residues 122–126, 145–150, and alanine 208; these read GAGGA and NRTVSR. Shikimate is bound at residue tyrosine 210. Residue glycine 231 coordinates NADP(+).

It belongs to the shikimate dehydrogenase family. As to quaternary structure, homodimer.

The catalysed reaction is shikimate + NADP(+) = 3-dehydroshikimate + NADPH + H(+). Its pathway is metabolic intermediate biosynthesis; chorismate biosynthesis; chorismate from D-erythrose 4-phosphate and phosphoenolpyruvate: step 4/7. Functionally, involved in the biosynthesis of the chorismate, which leads to the biosynthesis of aromatic amino acids. Catalyzes the reversible NADPH linked reduction of 3-dehydroshikimate (DHSA) to yield shikimate (SA). The polypeptide is Shikimate dehydrogenase (NADP(+)) (Natronomonas pharaonis (strain ATCC 35678 / DSM 2160 / CIP 103997 / JCM 8858 / NBRC 14720 / NCIMB 2260 / Gabara) (Halobacterium pharaonis)).